A 316-amino-acid polypeptide reads, in one-letter code: N-acetylmuramic acid 6-phosphate etherase (316 aa).

The SIS domain occupies 66 to 229; that stretch reads IVAAIGRGGR…STASMIRLGK (164 aa). The active-site Proton donor is glutamate 94. Glutamate 125 is a catalytic residue.

It belongs to the GCKR-like family. MurNAc-6-P etherase subfamily. Homodimer.

It carries out the reaction N-acetyl-D-muramate 6-phosphate + H2O = N-acetyl-D-glucosamine 6-phosphate + (R)-lactate. It participates in amino-sugar metabolism; 1,6-anhydro-N-acetylmuramate degradation. The protein operates within amino-sugar metabolism; N-acetylmuramate degradation. It functions in the pathway cell wall biogenesis; peptidoglycan recycling. Specifically catalyzes the cleavage of the D-lactyl ether substituent of MurNAc 6-phosphate, producing GlcNAc 6-phosphate and D-lactate. Together with AnmK, is also required for the utilization of anhydro-N-acetylmuramic acid (anhMurNAc) either imported from the medium or derived from its own cell wall murein, and thus plays a role in cell wall recycling. The chain is N-acetylmuramic acid 6-phosphate etherase from Jannaschia sp. (strain CCS1).